A 1305-amino-acid polypeptide reads, in one-letter code: Cyclin-G-associated kinase (1305 aa).

An N-acetylserine modification is found at S2. Residues S2 and S16 each carry the phosphoserine modification. Residues 40–315 enclose the Protein kinase domain; sequence LRVRRVLAEG…IAEVVRQLQE (276 aa). The active-site Proton acceptor is D173. Residues 332-354 form a disordered region; that stretch reads LEQNGGYGNSGPSRAQPPSGGPV. Residues 397–564 form the Phosphatase tensin-type domain; the sequence is SVANYAKGDL…EYVCDMVAEE (168 aa). S454 is subject to Phosphoserine. In terms of domain architecture, C2 tensin-type spans 570 to 708; it reads SKPMLVKSVV…FQVNLEVEVE (139 aa). Residues 747-856 form a disordered region; sequence FGKPELPRQP…TPRLAAGTRQ (110 aa). At S768 the chain carries Phosphoserine. Phosphothreonine is present on T774. Polar residues predominate over residues 776–789; sequence SDSPQSSSTDTNHF. S781 carries the post-translational modification Phosphoserine. Phosphothreonine is present on T792. Positions 805-817 are enriched in polar residues; it reads VDNTSPKESQSNL. Phosphoserine occurs at positions 809, 824, and 827. Residues 822 to 832 show a composition bias toward acidic residues; it reads DGSEVSDEEEA. A compositionally biased stretch (basic and acidic residues) spans 836 to 848; it reads SEERKPGAGEDTP. Residue S938 is modified to Phosphoserine. The tract at residues 1044 to 1141 is disordered; the sequence is LPGPASMPVP…PQAKPAPRAS (98 aa). A compositionally biased stretch (polar residues) spans 1105-1131; it reads VGTSATTHKSNSSWQTTRPTAPGTSWP. An Omega-N-methylarginine modification is found at R1122. Position 1171 is a phosphoserine (S1171). The region spanning 1241–1305 is the J domain; that stretch reads SRWTPVSMAD…FENQGSRPLF (65 aa).

This sequence belongs to the protein kinase superfamily. Ser/Thr protein kinase family.

The protein resides in the cytoplasm. Its subcellular location is the perinuclear region. The protein localises to the golgi apparatus. It is found in the trans-Golgi network. It localises to the cell junction. The protein resides in the focal adhesion. Its subcellular location is the cytoplasmic vesicle. The protein localises to the clathrin-coated vesicle. It catalyses the reaction L-seryl-[protein] + ATP = O-phospho-L-seryl-[protein] + ADP + H(+). It carries out the reaction L-threonyl-[protein] + ATP = O-phospho-L-threonyl-[protein] + ADP + H(+). Its function is as follows. Associates with cyclin G and CDK5. Seems to act as an auxilin homolog that is involved in the uncoating of clathrin-coated vesicles by Hsc70 in non-neuronal cells. Expression oscillates slightly during the cell cycle, peaking at G1. May play a role in clathrin-mediated endocytosis and intracellular trafficking, and in the dynamics of clathrin assembly/disassembly. The protein is Cyclin-G-associated kinase of Rattus norvegicus (Rat).